The chain runs to 192 residues: uncharacterized protein (192 aa).

This sequence belongs to the CAPAB/TerDEXZ family.

This is an uncharacterized protein from Bacillus subtilis (strain 168).